Here is a 126-residue protein sequence, read N- to C-terminus: UPF0538 protein C2orf76 homolog (126 aa).

This sequence belongs to the UPF0538 family.

This chain is UPF0538 protein C2orf76 homolog, found in Danio rerio (Zebrafish).